A 238-amino-acid chain; its full sequence is CS1 fimbrial subunit B (238 aa).

A signal peptide spans 1–17; sequence MRKLFLSLLMIPFVAKA.

It localises to the fimbrium. Its function is as follows. Might function as a shuttle protein in the transport of fimbria through the periplasmic space or might function as an adhesin. This Escherichia coli protein is CS1 fimbrial subunit B (csoB).